Here is a 760-residue protein sequence, read N- to C-terminus: Heat shock transcription factor (760 aa).

Disordered stretches follow at residues 1 to 132 (MIMN…PPVV) and 206 to 276 (FHPL…GPKT). 2 stretches are compositionally biased toward polar residues: residues 19-31 (TESNSGNETSSPS) and 38-88 (RSGT…SNKL). Basic and acidic residues predominate over residues 119-130 (DYKDSIDLDKPP). Over residues 221–247 (AGPANNSQQQQQQQQQDSSIPSDGISS) the composition is skewed to low complexity. The DNA-binding element occupies 276 to 385 (TRPAFVMKIW…EDLLDKIVRN (110 aa)). Residues 414 to 467 (ELETIKMNQYVISEDLRRVRQDNKMLWQENYLNRERNQVQGRTLDKILKFLSVV) are involved in trimerization. 4 disordered regions span residues 492–545 (TQYR…NNNN), 560–582 (LTNRAHSRRPSMSRTKSTPEGSI), 609–630 (HQPGATTNNNNHSSSTAISAPS), and 674–760 (QEQH…VSDH). Residues 515-539 (NSRFARDNNQTAQPTYESPLSTSDT) are compositionally biased toward polar residues. A Phosphoserine modification is found at S570. T574 carries the phosphothreonine modification. S576 bears the Phosphoserine mark. A Phosphothreonine modification is found at T577. Low complexity predominate over residues 613–628 (ATTNNNNHSSSTAISA). Positions 646–684 (RNLDDLEKHINKEGQSIQQVQDWIDKLAQEQHEKQQQQQ) form a coiled coil. Polar residues-rich tracts occupy residues 701 to 722 (ATTTPSSNVPNGGHYNNGNISF) and 731 to 742 (PGSNVSSNINDS). A compositionally biased stretch (basic and acidic residues) spans 744-760 (GNEKKSKKRSIEEVSDH).

It belongs to the HSF family. In terms of assembly, homotrimer. Homotrimerization increases the affinity of HSF1 to DNA. Interacts with HSP90. Activated by phosphorylation of at least Ser-570, Thr-574, Ser-576 and Thr-577 in response to heat shock. Additional unidentified residues are also phosphorylated in response to heat shock.

It is found in the nucleus. Its function is as follows. DNA-binding transcription factor that specifically binds heat shock promoter elements (HSE) and activates transcription. With HSP90, is required for the modulation of the chaperone levels in response to growth temperature, rather than the activation of acute responses to sudden thermal transitions. Activated during infection and contributes to full virulence. The chain is Heat shock transcription factor from Candida albicans (strain SC5314 / ATCC MYA-2876) (Yeast).